The chain runs to 141 residues: Small ribosomal subunit protein uS12 (141 aa).

Asp-89 bears the 3-methylthioaspartic acid mark. A disordered region spans residues 104 to 141 (ASGAVGPSNTNKLNRNVSRSKYGVKRPKAGAKPASKAK). The span at 110 to 122 (PSNTNKLNRNVSR) shows a compositional bias: polar residues. Basic residues predominate over residues 125-141 (YGVKRPKAGAKPASKAK).

It belongs to the universal ribosomal protein uS12 family. As to quaternary structure, part of the 30S ribosomal subunit. Contacts proteins S8 and S17. May interact with IF1 in the 30S initiation complex.

Functionally, with S4 and S5 plays an important role in translational accuracy. Interacts with and stabilizes bases of the 16S rRNA that are involved in tRNA selection in the A site and with the mRNA backbone. Located at the interface of the 30S and 50S subunits, it traverses the body of the 30S subunit contacting proteins on the other side and probably holding the rRNA structure together. The combined cluster of proteins S8, S12 and S17 appears to hold together the shoulder and platform of the 30S subunit. The protein is Small ribosomal subunit protein uS12 of Methylacidiphilum infernorum (isolate V4) (Methylokorus infernorum (strain V4)).